The sequence spans 449 residues: Tubulin beta-8 chain (449 aa).

Positions 11, 69, 138, 142, 143, 144, 204, and 226 each coordinate GTP. E69 contributes to the Mg(2+) binding site. The disordered stretch occupies residues 428 to 449 (ATADEEEGYEYEEDEVEVQEEQ). Residues 429–449 (TADEEEGYEYEEDEVEVQEEQ) show a composition bias toward acidic residues.

This sequence belongs to the tubulin family. In terms of assembly, dimer of alpha and beta chains. A typical microtubule is a hollow water-filled tube with an outer diameter of 25 nm and an inner diameter of 15 nM. Alpha-beta heterodimers associate head-to-tail to form protofilaments running lengthwise along the microtubule wall with the beta-tubulin subunit facing the microtubule plus end conferring a structural polarity. Microtubules usually have 13 protofilaments but different protofilament numbers can be found in some organisms and specialized cells. It depends on Mg(2+) as a cofactor.

Its subcellular location is the cytoplasm. It is found in the cytoskeleton. In terms of biological role, tubulin is the major constituent of microtubules, a cylinder consisting of laterally associated linear protofilaments composed of alpha- and beta-tubulin heterodimers. Microtubules grow by the addition of GTP-tubulin dimers to the microtubule end, where a stabilizing cap forms. Below the cap, tubulin dimers are in GDP-bound state, owing to GTPase activity of alpha-tubulin. In Arabidopsis thaliana (Mouse-ear cress), this protein is Tubulin beta-8 chain (TUBB8).